Reading from the N-terminus, the 470-residue chain is MIKPRTPPGIMELLPREQIAFQRMLDVIRRNYERFGFLPIETPVFELSDVLLTKSGGETERQVYFVQSTGALANAAAAADEGAENGGLPELALRFDLTVPLARYVAEHEHDLSFPFRRYQMQRVYRGERAQRGRFREFYQCDIDVIGKDALSIRYDAEVLAVIHAVFAELGIGDFKVQLNNRKLLRGFFESLGVAEGELQLAVLREVDKIDKRGADYVRDTLVGEGFGIAAEQVARILAFVAVRSEGHADALAQLQALEASVGASATLGEGIAELREVLELVKALGVPERAYCLNFSIARGLDYYTGTVYETTLTDHPQIGSICSGGRYESLASHYTKSRLPGVGISIGLTRLFWQLREAGLIQGIAESSVQAMVALMDETRLDDVLDIARRLRIAGINTEVQMEPKKVGKQFQYAARAGIRFVVLAGDDELARGVVAVKDLVREQQFDVARDELASTLLVELEQAKAMP.

The protein belongs to the class-II aminoacyl-tRNA synthetase family. In terms of assembly, homodimer.

Its subcellular location is the cytoplasm. It catalyses the reaction tRNA(His) + L-histidine + ATP = L-histidyl-tRNA(His) + AMP + diphosphate + H(+). The polypeptide is Histidine--tRNA ligase (Xanthomonas oryzae pv. oryzae (strain PXO99A)).